The primary structure comprises 95 residues: Aspartyl/glutamyl-tRNA(Asn/Gln) amidotransferase subunit C (95 aa).

This sequence belongs to the GatC family. As to quaternary structure, heterotrimer of A, B and C subunits.

It carries out the reaction L-glutamyl-tRNA(Gln) + L-glutamine + ATP + H2O = L-glutaminyl-tRNA(Gln) + L-glutamate + ADP + phosphate + H(+). It catalyses the reaction L-aspartyl-tRNA(Asn) + L-glutamine + ATP + H2O = L-asparaginyl-tRNA(Asn) + L-glutamate + ADP + phosphate + 2 H(+). In terms of biological role, allows the formation of correctly charged Asn-tRNA(Asn) or Gln-tRNA(Gln) through the transamidation of misacylated Asp-tRNA(Asn) or Glu-tRNA(Gln) in organisms which lack either or both of asparaginyl-tRNA or glutaminyl-tRNA synthetases. The reaction takes place in the presence of glutamine and ATP through an activated phospho-Asp-tRNA(Asn) or phospho-Glu-tRNA(Gln). In Rhizobium etli (strain ATCC 51251 / DSM 11541 / JCM 21823 / NBRC 15573 / CFN 42), this protein is Aspartyl/glutamyl-tRNA(Asn/Gln) amidotransferase subunit C.